The following is a 379-amino-acid chain: Sterol 24-C-methyltransferase erg-4 (379 aa).

It belongs to the class I-like SAM-binding methyltransferase superfamily. Erg6/SMT family.

The enzyme catalyses lanosterol + S-adenosyl-L-methionine = eburicol + S-adenosyl-L-homocysteine + H(+). It functions in the pathway steroid metabolism; ergosterol biosynthesis. Its function is as follows. Catalyzes the methyl transfer from S-adenosyl-methionine to the C-24 of lanosterol to form eburicol. The polypeptide is Sterol 24-C-methyltransferase erg-4 (Neurospora crassa (strain ATCC 24698 / 74-OR23-1A / CBS 708.71 / DSM 1257 / FGSC 987)).